Consider the following 67-residue polypeptide: Peptide Ctry2606 (67 aa).

Residues 1-23 (MKTQTALFSFFLVLLLVATQTEG) form the signal peptide. Leu-33 carries the leucine amide modification. A propeptide spanning residues 37-67 (ALRNQNFVDYAFDPSLSAADWRALETLLEEY) is cleaved from the precursor.

It belongs to the non-disulfide-bridged peptide (NDBP) superfamily. Short antimicrobial peptide (group 4) family. As to expression, expressed by the venom gland.

It is found in the secreted. Antimicrobial peptide. This chain is Peptide Ctry2606, found in Chaerilus tryznai (Scorpion).